Consider the following 1135-residue polypeptide: Topless-related protein 4 (1135 aa).

A LisH domain is found at 4-36; sequence LSRELVFLILQFLDEEKFKDTVHRLEKESGFFF. Positions 34–92 constitute a CTLH domain; it reads FFFNMRYFEDSVTAGEWDDVEKYLSGFTKVDDNRYSMKIFFEIRKQKYLEALDKKDHAK. Serine 214 is subject to Phosphoserine. A disordered region spans residues 281-303; it reads LKRERPRSPPTNSLSMDYQTADS. Positions 290–303 are enriched in polar residues; sequence PTNSLSMDYQTADS. WD repeat units lie at residues 355–395, 417–456, 462–503, 506–547, 550–593, 597–636, 638–680, 776–815, 843–881, 884–924, 927–966, and 1020–1059; these read SQGS…KLVS, EYTA…DLRN, AHAG…KLHT, GHEA…SRVD, APGR…VKRT, LGKR…LLSS, AAEG…RILH, LLPA…RNLL, NKED…TMTT, APPP…VKSK, GHQK…KQAS, and ESSG…LKCR. The interval 1095–1135 is disordered; sequence DGGVHVIEPPGPEGKWGISAPPENGAGPSVSSAPGSDQQPR. Positions 1119–1135 are enriched in low complexity; it reads GAGPSVSSAPGSDQQPR.

As to quaternary structure, tetramer. Interacts with WUS (via the C-terminal domain). Interacts with SPL (via EAR motif). Interacts with SPEAR3/TIE1. Binds to and corepresses GAF1/IDD2 at the promoter of GA20OX2 gene.

The protein localises to the nucleus. Functionally, transcription corepressor of Zinc finger transcription factors GAF1/IDD2 and ENY/IDD1 in regulation of gibberellin homeostasis and signaling. This is Topless-related protein 4 (TPR4) from Arabidopsis thaliana (Mouse-ear cress).